The sequence spans 221 residues: uncharacterized protein (221 aa).

An N-terminal signal peptide occupies residues 1–30; sequence MAKFNNNILLIILIIVILFIIFYFLNKNNQ.

The protein localises to the virion. This is an uncharacterized protein from Acanthamoeba polyphaga mimivirus (APMV).